Reading from the N-terminus, the 393-residue chain is MTTYNNKGPKPERGRFLHFHSVTFWVGNAKQAASFYCNKMGFEPLAYRGLETGSREVVSHVIKQGKIVFVLCSALNPWNKEMGDHLVKHGDGVKDIAFEVEDCDHIVQKARERGAKIVREPWVEQDKFGKVKFAVLQTYGDTTHTLVEKINYTGRFLPGFEAPTYKDTLLPKLPRCNLEIIDHIVGNQPDQEMQSASEWYLKNLQFHRFWSVDDTQVHTEYSSLRSIVVTNYEESIKMPINEPAPGRKKSQIQEYVDYNGGAGVQHIALKTEDIITAIRHLRERGTEFLAAPSSYYKLLRENLKSAKIQVKESMDVLEELHILVDYDEKGYLLQIFTKPMQDRPTLFLEVIQRHNHQGFGAGNFNSLFKAFEEEQALRGNLTDLEPNGVRSGM.

An N-acetylthreonine modification is found at Thr-2. VOC domains lie at 18–149 (HFHS…LVEK) and 180–338 (IIDH…IFTK). Lys-132 bears the N6-succinyllysine mark. His-183 is a Fe cation binding site. 3 positions are modified to phosphoserine: Ser-211, Ser-226, and Ser-250. The Fe cation site is built by His-266 and Glu-349.

The protein belongs to the 4HPPD family. As to quaternary structure, homodimer. Requires Fe cation as cofactor.

It localises to the cytoplasm. The protein localises to the endoplasmic reticulum membrane. Its subcellular location is the golgi apparatus membrane. It catalyses the reaction 3-(4-hydroxyphenyl)pyruvate + O2 = homogentisate + CO2. It participates in amino-acid degradation; L-phenylalanine degradation; acetoacetate and fumarate from L-phenylalanine: step 3/6. Catalyzes the conversion of 4-hydroxyphenylpyruvic acid to homogentisic acid, one of the steps in tyrosine catabolism. This Mus musculus (Mouse) protein is 4-hydroxyphenylpyruvate dioxygenase (Hpd).